Consider the following 93-residue polypeptide: Large ribosomal subunit protein bL31B (93 aa).

This sequence belongs to the bacterial ribosomal protein bL31 family. Type B subfamily. As to quaternary structure, part of the 50S ribosomal subunit.

The chain is Large ribosomal subunit protein bL31B from Pseudomonas syringae pv. syringae (strain B728a).